A 273-amino-acid polypeptide reads, in one-letter code: Large ribosomal subunit protein uL2cz/uL2cy (273 aa).

Disordered stretches follow at residues 1–20 (MAKH…TIDR) and 225–273 (PVDH…RRRK).

This sequence belongs to the universal ribosomal protein uL2 family. In terms of assembly, part of the 50S ribosomal subunit.

The protein localises to the plastid. The protein resides in the chloroplast. This Oryza nivara (Indian wild rice) protein is Large ribosomal subunit protein uL2cz/uL2cy (rpl2-A).